We begin with the raw amino-acid sequence, 124 residues long: Fluoride-specific ion channel FluC (124 aa).

4 helical membrane-spanning segments follow: residues 4 to 24 (ILFVALGGSIGAVFRYLISIF), 35 to 55 (FGTLLVNIIGSFLMGVIYALG), 70 to 90 (VGLLGALTTFSTFSNETLLLI), and 95 to 115 (WLKAFLNIALNLCLCIFMVYL). Na(+) is bound by residues G74 and T77.

The protein belongs to the fluoride channel Fluc/FEX (TC 1.A.43) family.

It localises to the cell inner membrane. It catalyses the reaction fluoride(in) = fluoride(out). With respect to regulation, na(+) is not transported, but it plays an essential structural role and its presence is essential for fluoride channel function. Its function is as follows. Fluoride-specific ion channel. Important for reducing fluoride concentration in the cell, thus reducing its toxicity. The chain is Fluoride-specific ion channel FluC from Shewanella woodyi (strain ATCC 51908 / MS32).